The chain runs to 229 residues: UPF0319 protein Sbal223_2728 (229 aa).

An N-terminal signal peptide occupies residues 1-21; the sequence is MKSLLPISSLLVLLGSASAFA.

It belongs to the UPF0319 family.

This chain is UPF0319 protein Sbal223_2728, found in Shewanella baltica (strain OS223).